A 106-amino-acid polypeptide reads, in one-letter code: Starvation responsive small protein A (106 aa).

The helical transmembrane segment at 15 to 32 threads the bilayer; the sequence is ILLVNAGLISAYGVRIIF.

The protein localises to the cell membrane. Involved in starvation response and aggregation stage of the life cycle. May be involved in fruiting body morphogenesis and spore formation. This is Starvation responsive small protein A from Dictyostelium discoideum (Social amoeba).